Consider the following 115-residue polypeptide: Fluoride-specific ion channel FluC 4 (115 aa).

2 helical membrane-spanning segments follow: residues 19–39 (WGTF…AGLG) and 42–62 (LGGI…LLGG). Na(+)-binding residues include G61 and T64. The chain crosses the membrane as a helical span at residues 89–109 (IVASALLCVLAVAAGYGGIMW).

Belongs to the fluoride channel Fluc/FEX (TC 1.A.43) family.

The protein localises to the cell inner membrane. The enzyme catalyses fluoride(in) = fluoride(out). Na(+) is not transported, but it plays an essential structural role and its presence is essential for fluoride channel function. Fluoride-specific ion channel. Important for reducing fluoride concentration in the cell, thus reducing its toxicity. The protein is Fluoride-specific ion channel FluC 4 of Brucella melitensis biotype 1 (strain ATCC 23456 / CCUG 17765 / NCTC 10094 / 16M).